Consider the following 180-residue polypeptide: Calcium-binding protein E (180 aa).

4 EF-hand domains span residues 3-38 (KVEA…NSNI), 40-76 (DPLA…KKIK), 85-120 (ALRS…DPDF), and 139-174 (RAKS…HPEF). Asp16, Asp18, Asp20, Asn22, and Glu27 together coordinate Ca(2+). Ca(2+) contacts are provided by Asp98, Asp100, Asp102, Glu109, Asp152, Asp154, Asn156, Lys158, and Glu163.

In Dictyostelium discoideum (Social amoeba), this protein is Calcium-binding protein E (cbpE).